The chain runs to 429 residues: Adenylosuccinate synthetase (429 aa).

GTP contacts are provided by residues 12 to 18 (GDEGKGK) and 40 to 42 (GHT). Aspartate 13 functions as the Proton acceptor in the catalytic mechanism. Mg(2+) is bound by residues aspartate 13 and glycine 40. IMP contacts are provided by residues 13–16 (DEGK), 38–41 (NAGH), threonine 129, arginine 143, glutamine 223, threonine 238, and arginine 302. Residue histidine 41 is the Proton donor of the active site. 298-304 (TVTGRKR) provides a ligand contact to substrate. GTP is bound by residues arginine 304, 330–332 (KLD), and 412–414 (STS).

The protein belongs to the adenylosuccinate synthetase family. Homodimer. Requires Mg(2+) as cofactor.

It localises to the cytoplasm. It carries out the reaction IMP + L-aspartate + GTP = N(6)-(1,2-dicarboxyethyl)-AMP + GDP + phosphate + 2 H(+). It functions in the pathway purine metabolism; AMP biosynthesis via de novo pathway; AMP from IMP: step 1/2. Plays an important role in the de novo pathway of purine nucleotide biosynthesis. Catalyzes the first committed step in the biosynthesis of AMP from IMP. The chain is Adenylosuccinate synthetase from Sphingopyxis alaskensis (strain DSM 13593 / LMG 18877 / RB2256) (Sphingomonas alaskensis).